Reading from the N-terminus, the 120-residue chain is uncharacterized protein (120 aa).

The protein to E.coli YiaW.

This is an uncharacterized protein from Escherichia coli (strain K12).